The chain runs to 265 residues: Apolipoprotein A-I (265 aa).

The first 18 residues, 1 to 18 (MKAVVLAVAALFLAGGEA), serve as a signal peptide directing secretion. A run of 2 repeats spans residues 68–89 (LKLT…EQLG) and 90–111 (PVTQ…QEMN). The interval 68-265 (LKLTENLDTL…EEASKKLSSQ (198 aa)) is 10 X approximate tandem repeats. Met110 is subject to Methionine sulfoxide. The stretch at 112 to 122 (KDLADMKQKVQ) is one 3; half-length repeat. Tandem repeats lie at residues 123 to 144 (PYME…QKVE), 145 to 166 (PLST…EKLA), and 167 to 188 (PLGA…TQLA). Residues 189 to 208 (PYSEQMRERLAERLAALRDS) form a 7; truncated repeat. Residue Met194 is modified to Methionine sulfoxide. Repeat 8 spans residues 209 to 230 (PSLAEYQAKAHEHLKTLHEKAQ). The 9; half-length repeat unit spans residues 231–241 (PALSDLGQGVL). Copy 10 of the repeat occupies 242–265 (PVLESLKATLVGAIEEASKKLSSQ).

It belongs to the apolipoprotein A1/A4/E family. In terms of assembly, homodimer. Interacts with APOA1BP and CLU. Component of a sperm activating protein complex (SPAP), consisting of APOA1, an immunoglobulin heavy chain, an immunoglobulin light chain and albumin. Interacts with NDRG1. Interacts with SCGB3A2. Interacts with NAXE and YJEFN3. Glycosylated. Post-translationally, palmitoylated. In terms of processing, phosphorylation sites are present in the extracellular medium.

The protein localises to the secreted. Participates in the reverse transport of cholesterol from tissues to the liver for excretion by promoting cholesterol efflux from tissues and by acting as a cofactor for the lecithin cholesterol acyltransferase (LCAT). As part of the SPAP complex, activates spermatozoa motility. This is Apolipoprotein A-I (Apoa1) from Dipodomys ordii (Ord's kangaroo rat).